The primary structure comprises 159 residues: MFDILMYLFENYVQNDLEVDMLVDEDQLKKELALAGFRQTEIIKALNWLEHLADLRDSEQPYLCHHEQHSFRVYTPEEMERLDVECRGFLMFLEQIKVLNVEAREMVIDRVMDLDESSLTLDDLKWVIMMVLFNAPGQEMAYNQMENMMFDEQPGRLHS.

It belongs to the Smg family.

The protein is Protein Smg homolog of Shewanella amazonensis (strain ATCC BAA-1098 / SB2B).